A 115-amino-acid chain; its full sequence is NADH-ubiquinone oxidoreductase chain 3 (115 aa).

3 consecutive transmembrane segments (helical) span residues 3 to 23 (LMLALTVNTLLTALLTIIMFW), 55 to 75 (FFLVAITFLLFDLEIALLLSL), and 84 to 104 (LPTMIKTSIMFITILALSLAY).

Belongs to the complex I subunit 3 family. In terms of assembly, core subunit of respiratory chain NADH dehydrogenase (Complex I) which is composed of 45 different subunits. Interacts with TMEM186. Interacts with TMEM242.

Its subcellular location is the mitochondrion inner membrane. It carries out the reaction a ubiquinone + NADH + 5 H(+)(in) = a ubiquinol + NAD(+) + 4 H(+)(out). Its function is as follows. Core subunit of the mitochondrial membrane respiratory chain NADH dehydrogenase (Complex I) which catalyzes electron transfer from NADH through the respiratory chain, using ubiquinone as an electron acceptor. Essential for the catalytic activity of complex I. This is NADH-ubiquinone oxidoreductase chain 3 from Papio hamadryas (Hamadryas baboon).